The sequence spans 633 residues: MPDNLSLHLSGSSKRLNSRQLMESSNETFAPNNVDLEKEYKSSQSNITTEVYEASSFEEKVSSEKPQYSSFWKKIYYEYVVVDKSILGVSILDSFMYNQDLKPVEKERRVWSWYNYCYFWLAECFNINTWQIAATGLQLGLNWWQCWITIWIGYGFVGAFVVLASRVGSAYHLSFPISSRASFGIFFSLWPVINRVVMAIVWYSVQAYIAATPVSLMLKSIFGKDLQDKIPDHFGSPNATTYEFMCFFIFWAASLPFLLVPPHKIRHLFTVKAVLVPFASFGFLIWAIRRAHGRIALGSLTDVQPHGSAFSWAFLRSLMGCMANFSTMVINAPDFSRFSKNPNSALWSQLVCIPFLFSITCLIGILVTAAGYEIYGINYWSPLDVLEKFLQTTYNKGTRAGVFLISFVFAVAQLGTNISANSLSCGTDMSAIFPKFINIKRGSLFCAAMALCICPWNLMATSSKFTMALSAYAIFLSSIAGVVCSDYFVVRRGYIKLTHIYSHQKGSFYMYGNRFGINWRALAAYLCGVAPCLPGFIAEVGAPAIKVSDGAMKLYYLSYWVGYGLSFSSYTALCYFFPVPGCPVNNIIKDKGWFQRWANVDDFEEEWKDTIERDDLVDDNISVYEHEHEKTFI.

Helical transmembrane passes span 143 to 163, 173 to 193, 197 to 217, 242 to 262, 268 to 288, 310 to 330, 350 to 370, 400 to 420, 442 to 462, 465 to 485, 521 to 541, and 559 to 579; these read WWQC…FVVL, LSFP…WPVI, VMAI…VSLM, YEFM…LVPP, LFTV…IWAI, FSWA…TMVI, LVCI…VTAA, AGVF…NISA, GSLF…MATS, FTMA…VVCS, ALAA…AEVG, and YWVG…FFPV.

This sequence belongs to the purine-cytosine permease (2.A.39) family. In terms of processing, glycosylated (possible); but there is not yet direct biochemical evidence for it.

The protein resides in the membrane. Functionally, transport of uracil. The polypeptide is Uracil permease (FUR4) (Saccharomyces cerevisiae (strain ATCC 204508 / S288c) (Baker's yeast)).